The chain runs to 296 residues: D-alanine--D-alanine ligase (296 aa).

The 194-residue stretch at 99-292 (TYRVLDGYVN…FEELVDAIIQ (194 aa)) folds into the ATP-grasp domain. 125 to 176 (GFPCVIKPRKEGSSIGVHICDNSNQLYNDLSEELKKYNEMMIQRYIEGRELT) is an ATP binding site. Mg(2+)-binding residues include aspartate 247, glutamate 259, and asparagine 261.

It belongs to the D-alanine--D-alanine ligase family. Mg(2+) serves as cofactor. Requires Mn(2+) as cofactor.

The protein localises to the cytoplasm. It carries out the reaction 2 D-alanine + ATP = D-alanyl-D-alanine + ADP + phosphate + H(+). It functions in the pathway cell wall biogenesis; peptidoglycan biosynthesis. Cell wall formation. In Pseudothermotoga lettingae (strain ATCC BAA-301 / DSM 14385 / NBRC 107922 / TMO) (Thermotoga lettingae), this protein is D-alanine--D-alanine ligase.